The following is a 94-amino-acid chain: uncharacterized protein (94 aa).

An N-terminal signal peptide occupies residues 1 to 19 (MKFSGLILGALALVSGAIA).

It belongs to the protease inhibitor I9 family.

This is an uncharacterized protein from Neurospora crassa (strain ATCC 24698 / 74-OR23-1A / CBS 708.71 / DSM 1257 / FGSC 987).